We begin with the raw amino-acid sequence, 385 residues long: 3-hydroxyisobutyryl-CoA hydrolase, mitochondrial (385 aa).

Residues 1–32 (MGQPYAWRLLSRVSSFRRASVILQHLRMSMHT) constitute a mitochondrion transit peptide. 3 positions are modified to N6-acetyllysine; alternate: K54, K91, and K100. K54, K91, and K100 each carry N6-succinyllysine; alternate. E120, G145, E168, and D176 together coordinate substrate. N6-acetyllysine; alternate is present on K220. N6-succinyllysine; alternate is present on K220. Residue S233 is modified to Phosphoserine. 2 positions are modified to N6-succinyllysine: K249 and K256. K296 is subject to N6-acetyllysine; alternate. N6-succinyllysine; alternate is present on K296. Residue K300 is modified to N6-succinyllysine. K352 bears the N6-acetyllysine; alternate mark. K352 carries the post-translational modification N6-succinyllysine; alternate. 2 positions are modified to N6-acetyllysine: K359 and K364. K376 is modified (N6-succinyllysine).

The protein belongs to the enoyl-CoA hydratase/isomerase family.

The protein resides in the mitochondrion. It carries out the reaction 3-hydroxy-2-methylpropanoyl-CoA + H2O = 3-hydroxy-2-methylpropanoate + CoA + H(+). It participates in amino-acid degradation; L-valine degradation. In terms of biological role, hydrolyzes 3-hydroxyisobutyryl-CoA (HIBYL-CoA), a saline catabolite. Has high activity toward isobutyryl-CoA. Could be an isobutyryl-CoA dehydrogenase that functions in valine catabolism. Also hydrolyzes 3-hydroxypropanoyl-CoA. This is 3-hydroxyisobutyryl-CoA hydrolase, mitochondrial (Hibch) from Mus musculus (Mouse).